The primary structure comprises 213 residues: Bcl-2-related ovarian killer protein (213 aa).

The BH4 signature appears at 32–44 (KALCRDYINSRLI). A BH3 motif is present at residues 67–83 (VSAILLRLGDELEYIRP). The BH1 signature appears at 113–132 (QIFTAGITWGKVVSLYAVAA). The BH2 signature appears at 165–179 (WLKRRGGWADITKCV). The helical transmembrane segment at 190–210 (WLVAAVCSFGHFLKAIFFVLL) threads the bilayer.

It belongs to the Bcl-2 family.

The protein localises to the membrane. May play a role in apoptosis. The polypeptide is Bcl-2-related ovarian killer protein (Gallus gallus (Chicken)).